Consider the following 294-residue polypeptide: ATP synthase gamma chain (294 aa).

Belongs to the ATPase gamma chain family. F-type ATPases have 2 components, CF(1) - the catalytic core - and CF(0) - the membrane proton channel. CF(1) has five subunits: alpha(3), beta(3), gamma(1), delta(1), epsilon(1). CF(0) has three main subunits: a, b and c.

It is found in the cell membrane. In terms of biological role, produces ATP from ADP in the presence of a proton gradient across the membrane. The gamma chain is believed to be important in regulating ATPase activity and the flow of protons through the CF(0) complex. This is ATP synthase gamma chain from Ruminiclostridium cellulolyticum (strain ATCC 35319 / DSM 5812 / JCM 6584 / H10) (Clostridium cellulolyticum).